The chain runs to 293 residues: Probable 2-(5''-triphosphoribosyl)-3'-dephosphocoenzyme-A synthase (293 aa).

This sequence belongs to the CitG/MdcB family.

The enzyme catalyses 3'-dephospho-CoA + ATP = 2'-(5''-triphospho-alpha-D-ribosyl)-3'-dephospho-CoA + adenine. Involved in the formation of 2-(5''-phosphoribosyl)-3'-dephosphocoenzyme-A, the prosthetic group of the acyl-carrier protein of the malonate decarboxylase. The chain is Probable 2-(5''-triphosphoribosyl)-3'-dephosphocoenzyme-A synthase from Pseudomonas aeruginosa (strain ATCC 15692 / DSM 22644 / CIP 104116 / JCM 14847 / LMG 12228 / 1C / PRS 101 / PAO1).